Reading from the N-terminus, the 347-residue chain is Merozoite surface protein 2 (347 aa).

Positions 1-20 are cleaved as a signal peptide; the sequence is MKVIKTLSIINFFIFVTFNI. N-linked (GlcNAc...) asparagine glycans are attached at residues Asn-22 and Asn-36. Residues 44–273 are polymorphic region; the sequence is AESKPPTGDG…EQTESPELQS (230 aa). A run of 22 repeats spans residues 53–60, 61–68, 69–76, 77–84, 85–88, 89–92, 93–96, 97–100, 101–104, 105–108, 109–112, 113–116, 117–120, 121–124, 125–128, 129–132, 133–136, 137–140, 141–144, 145–152, 153–156, and 157–164. The segment at 53-164 is 6 X 8 AA repeats of G-A-V-A-S-A-G-N; the sequence is GAVASAGNGA…GNGAVASAGN (112 aa). The 16 X 4 AA repeats of G-A-G-N stretch occupies residues 85-156; it reads GAGNGAGNGA…VASAGNGAGN (72 aa). The span at 165-206 shows a compositional bias: low complexity; that stretch reads GAVAERSSSTPATTTTTTTTNDAEASTSTSSENSNHNNAETN. Positions 165–308 are disordered; the sequence is GAVAERSSST…DSQKECTDGN (144 aa). Polar residues-rich tracts occupy residues 213–240 and 247–275; these read VQPN…NVPR and KSPT…QSAP. N-linked (GlcNAc...) asparagine glycosylation is present at Asn-224. An N-linked (GlcNAc...) asparagine glycan is attached at Asn-296. Cys-304 and Cys-312 are oxidised to a cystine. Asn-320 and Asn-321 each carry an N-linked (GlcNAc...) asparagine glycan. Asn-321 carries GPI-anchor amidated asparagine lipidation. A propeptide spans 322 to 347 (removed in mature form); that stretch reads SSNIASINKFVVLISATLVLSFAIFI.

It is found in the cell membrane. In terms of biological role, may play a role in the merozoite attachment to the erythrocyte. The sequence is that of Merozoite surface protein 2 from Plasmodium falciparum (isolate Nig32 / Nigeria).